The chain runs to 502 residues: ATP synthase subunit alpha (502 aa).

Positions P114–R139 are disordered. G169–T176 is a binding site for ATP.

Belongs to the ATPase alpha/beta chains family. As to quaternary structure, F-type ATPases have 2 components, CF(1) - the catalytic core - and CF(0) - the membrane proton channel. CF(1) has five subunits: alpha(3), beta(3), gamma(1), delta(1), epsilon(1). CF(0) has three main subunits: a(1), b(2) and c(9-12). The alpha and beta chains form an alternating ring which encloses part of the gamma chain. CF(1) is attached to CF(0) by a central stalk formed by the gamma and epsilon chains, while a peripheral stalk is formed by the delta and b chains.

It is found in the cell membrane. It carries out the reaction ATP + H2O + 4 H(+)(in) = ADP + phosphate + 5 H(+)(out). Functionally, produces ATP from ADP in the presence of a proton gradient across the membrane. The alpha chain is a regulatory subunit. This Halalkalibacterium halodurans (strain ATCC BAA-125 / DSM 18197 / FERM 7344 / JCM 9153 / C-125) (Bacillus halodurans) protein is ATP synthase subunit alpha.